A 33-amino-acid polypeptide reads, in one-letter code: IDTCRLPSDRGRCKASFERWYFNGRTCAKFIYG.

The BPTI/Kunitz inhibitor domain maps to 4 to 33; it reads CRLPSDRGRCKASFERWYFNGRTCAKFIYG.

Belongs to the venom Kunitz-type family. 02 (native) subfamily. As to expression, expressed by the venom gland.

Its subcellular location is the secreted. Functionally, serine protease inhibitor that inhibits trypsin at a molar ratio of 1:1. This Cyriopagopus hainanus (Chinese bird spider) protein is Kunitz-type serine protease inhibitor hainantoxin F7-25.66.